A 111-amino-acid chain; its full sequence is uncharacterized protein (111 aa).

It localises to the cytoplasm. The protein resides in the nucleus. This is an uncharacterized protein from Saccharomyces cerevisiae (strain ATCC 204508 / S288c) (Baker's yeast).